We begin with the raw amino-acid sequence, 1010 residues long: Sodium/potassium-transporting ATPase subunit alpha-3 (1010 aa).

The segment at 1 to 21 is disordered; it reads MGDKGEKESPKKGKGKRDLDD. The Cytoplasmic segment spans residues 1 to 74; that stretch reads MGDKGEKESP…NALTPPPTTP (74 aa). The tract at residues 69–71 is interaction with phosphoinositide-3 kinase; the sequence is PPP. The chain crosses the membrane as a helical span at residues 75–95; the sequence is EWVKFCRQLFGGFSILLWIGA. Residues 96 to 118 are Extracellular-facing; it reads ILCFLAYGIQAGTEDEPSNDNLY. A helical transmembrane segment spans residues 119 to 139; the sequence is LGIVLAAVVIITGCFSYYQEA. Residues 140–275 are Cytoplasmic-facing; that stretch reads KSSKIMESFK…VGKTPIAVEI (136 aa). Residues 276–295 traverse the membrane as a helical segment; it reads EHFIQLITGVAVFLGISFFV. Residues 296-307 are Extracellular-facing; the sequence is LSLILGYTWLEA. The chain crosses the membrane as a helical span at residues 308 to 325; it reads VIFLIGIIVANVPEGLLA. The Cytoplasmic segment spans residues 326-759; sequence TVTVCLTLTA…EEGRLIFDNL (434 aa). The 4-aspartylphosphate intermediate role is filled by D363. The Mg(2+) site is built by D704 and D708. Residues 760-779 traverse the membrane as a helical segment; sequence KKSIAYTLTSNIPEITPFLL. Over 780–789 the chain is Extracellular; that stretch reads FIMANIPLPL. A helical membrane pass occupies residues 790 to 810; it reads GTITILCIDLGTDMVPAISLA. Topologically, residues 811 to 830 are cytoplasmic; the sequence is YEAAESDIMKRQPRNPRSDK. The chain crosses the membrane as a helical span at residues 831–853; it reads LVNERLISMAYGQIGMIQALGGF. Residues 854 to 905 are Extracellular-facing; that stretch reads FSYFVILAENGFLPSCLVGIRLSWDDRTINDLEDSYGQQWTYEQRKVVEFTC. Residues 906–925 traverse the membrane as a helical segment; sequence HTAFFVSIVVVQWADLIICK. Topologically, residues 926–938 are cytoplasmic; that stretch reads TRRNSVFQQGMKN. Position 930 is a phosphoserine; by PKA (S930). Residues 939–957 traverse the membrane as a helical segment; the sequence is KILIFGLFEETALAAFLSY. Over 958 to 972 the chain is Extracellular; the sequence is CPGMDVALRMYPLKP. A helical transmembrane segment spans residues 973–993; that stretch reads SWWFCAFPYSFLIFVYDEIRK. Topologically, residues 994–1010 are cytoplasmic; the sequence is LILRRNPGGWVEKETYY.

The protein belongs to the cation transport ATPase (P-type) (TC 3.A.3) family. Type IIC subfamily. As to quaternary structure, the sodium/potassium-transporting ATPase is composed of a catalytic alpha subunit, an auxiliary non-catalytic beta subunit and an additional regulatory subunit.

The protein localises to the cell membrane. It catalyses the reaction K(+)(out) + Na(+)(in) + ATP + H2O = K(+)(in) + Na(+)(out) + ADP + phosphate + H(+). In terms of biological role, this is the catalytic component of the active enzyme, which catalyzes the hydrolysis of ATP coupled with the exchange of sodium and potassium ions across the plasma membrane. This action creates the electrochemical gradient of sodium and potassium ions, providing the energy for active transport of various nutrients. The sequence is that of Sodium/potassium-transporting ATPase subunit alpha-3 (ATP1A3) from Gallus gallus (Chicken).